Consider the following 40-residue polypeptide: MADTTGRIPLWIIGTVTGLLVIGLIGIFFYGSYSGLGSSL.

A helical membrane pass occupies residues 8–28 (IPLWIIGTVTGLLVIGLIGIF).

The protein belongs to the PsbJ family. As to quaternary structure, PSII is composed of 1 copy each of membrane proteins PsbA, PsbB, PsbC, PsbD, PsbE, PsbF, PsbH, PsbI, PsbJ, PsbK, PsbL, PsbM, PsbT, PsbX, PsbY, PsbZ, Psb30/Ycf12, at least 3 peripheral proteins of the oxygen-evolving complex and a large number of cofactors. It forms dimeric complexes.

It localises to the plastid. It is found in the chloroplast thylakoid membrane. One of the components of the core complex of photosystem II (PSII). PSII is a light-driven water:plastoquinone oxidoreductase that uses light energy to abstract electrons from H(2)O, generating O(2) and a proton gradient subsequently used for ATP formation. It consists of a core antenna complex that captures photons, and an electron transfer chain that converts photonic excitation into a charge separation. In Ipomoea purpurea (Common morning glory), this protein is Photosystem II reaction center protein J.